A 131-amino-acid polypeptide reads, in one-letter code: Glycine cleavage system H protein (131 aa).

Positions 24–106 constitute a Lipoyl-binding domain; the sequence is TVTIGITDHA…YEDGWIIKLK (83 aa). Lys65 bears the N6-lipoyllysine mark.

Belongs to the GcvH family. In terms of assembly, the glycine cleavage system is composed of four proteins: P, T, L and H. The cofactor is (R)-lipoate.

Functionally, the glycine cleavage system catalyzes the degradation of glycine. The H protein shuttles the methylamine group of glycine from the P protein to the T protein. This Chromohalobacter salexigens (strain ATCC BAA-138 / DSM 3043 / CIP 106854 / NCIMB 13768 / 1H11) protein is Glycine cleavage system H protein.